The primary structure comprises 877 residues: MTTTPPVLSGPEIRQQFLNFFADRQHQILPSASLVPEDPTVLLTIAGMLPFKPIFLGQKSAEFPRATTSQKCIRTNDIENVGRTARHHTFFEMLGNFSFGDYFKSQAIAWAWELSTQVFKLPAERLVVSVFEEDDEAFAIWRDEIGIPAHRIQRMGADDNFWVSGPTGPCGPCSEIYYDFHPELGDEKLDLEDDSRFIEFYNLVFMQYNRDNAGNLTPLEKKNIDTGMGLERMAQILQKVPNNYETDLIFPIIQTAANIAGIDYAQANEKTKVSLKVIGDHVRSVVHMIADGISASNLGRGYVLRRLIRRVVRHGRLLGINGEFTTKVAATAVQLAQPVYPNVLERQSLIEQELQREEAAFLKTLERGEKLLADLMADGVTEIAGADAFTLYDTFGFPLELTQEIAEEQGITVDVEGFEKAMQEQQERSKAAHETIDLTVQESLDKLANHIHPTEFLGYTDLQSSAIVKAVLVGGELVDQAVAGQTVQIVLDQTPFYGESGGQIGDKGFLNGDNLLIRIEDVKRESGIFIHFGRVERGTVQIGTTITATIDRACRRRAQANHTATHLLQSALKRVVDEGISQAGSLVDFNRLRFDFNSPRAVTMEELQQIEDLINQWIAEAHQTEVAVMPIADAKAKGAIAMFGEKYGAEVRVIDVPGVSLELCGGTHVANTAEIGLFKIVAETGIAAGVRRIEAVAGPSVLDYLNVREAVVKELGDRLKAKPEEIPDRVHQLQQELKASQKQLEALKQELALQKSEQLLTQAQTVGEFKILVADLGTVDGESLKTAAERLQQKLGESAVVLASIPEEGKVSLVAAFSPQLVKTKQLKAGQFIGAIAKICGGGGGGRPNLAQAGGRDASKLPEALATAKQTLLAELG.

Residues H562, H566, C664, and H668 each contribute to the Zn(2+) site.

The protein belongs to the class-II aminoacyl-tRNA synthetase family. Zn(2+) is required as a cofactor.

It localises to the cytoplasm. It catalyses the reaction tRNA(Ala) + L-alanine + ATP = L-alanyl-tRNA(Ala) + AMP + diphosphate. Catalyzes the attachment of alanine to tRNA(Ala) in a two-step reaction: alanine is first activated by ATP to form Ala-AMP and then transferred to the acceptor end of tRNA(Ala). Also edits incorrectly charged Ser-tRNA(Ala) and Gly-tRNA(Ala) via its editing domain. The chain is Alanine--tRNA ligase from Synechocystis sp. (strain ATCC 27184 / PCC 6803 / Kazusa).